The following is a 368-amino-acid chain: Chaperone protein DnaJ (368 aa).

Positions 5 to 70 (DYYQVLGVPR…KKRKLYDTHG (66 aa)) constitute a J domain. The segment at 124–201 (GVERQIQIPT…CNGAGRVEDH (78 aa)) adopts a CR-type zinc-finger fold. Zn(2+) is bound by residues C137, C140, C153, C156, C175, C178, C189, and C192. 4 CXXCXGXG motif repeats span residues 137–144 (CTHCNGSG), 153–160 (CGTCRGSG), 175–182 (CPHCGGRG), and 189–196 (CKVCNGAG).

The protein belongs to the DnaJ family. As to quaternary structure, homodimer. Zn(2+) is required as a cofactor.

The protein resides in the cytoplasm. Functionally, participates actively in the response to hyperosmotic and heat shock by preventing the aggregation of stress-denatured proteins and by disaggregating proteins, also in an autonomous, DnaK-independent fashion. Unfolded proteins bind initially to DnaJ; upon interaction with the DnaJ-bound protein, DnaK hydrolyzes its bound ATP, resulting in the formation of a stable complex. GrpE releases ADP from DnaK; ATP binding to DnaK triggers the release of the substrate protein, thus completing the reaction cycle. Several rounds of ATP-dependent interactions between DnaJ, DnaK and GrpE are required for fully efficient folding. Also involved, together with DnaK and GrpE, in the DNA replication of plasmids through activation of initiation proteins. The sequence is that of Chaperone protein DnaJ from Xylella fastidiosa (strain M12).